Here is a 104-residue protein sequence, read N- to C-terminus: Vesicle-associated membrane protein 3 (104 aa).

Residues 1 to 23 form a disordered region; the sequence is MTTNAPAGSSAAAGSSRRLQQTQ. The Cytoplasmic portion of the chain corresponds to 1–81; sequence MTTNAPAGSS…KRKYWWKNCK (81 aa). A compositionally biased stretch (low complexity) spans 7–16; sequence AGSSAAAGSS. Residues 18-78 form the v-SNARE coiled-coil homology domain; that stretch reads RLQQTQNQVD…AKLKRKYWWK (61 aa). Glycyl lysine isopeptide (Lys-Gly) (interchain with G-Cter in ubiquitin) cross-links involve residues K70, K72, and K81. The helical; Anchor for type IV membrane protein transmembrane segment at 82 to 102 threads the bilayer; it reads MWAIGITVVVIIIIIIVVWSI. Residues 103 to 104 lie on the Vesicular side of the membrane; sequence SS.

This sequence belongs to the synaptobrevin family. Interacts with POPDC1 (via the C-terminus cytoplasmic tail). Interacts with BCAP31; involved in VAMP3 export from the endoplasmic reticulum. Interacts with BAIAP3; this interaction is increased in the presence of calcium. Interacts with PICALM. Ubiquitinated by RNF167 at Lys-70, Lys-72 and Lys-81, regulating the recycling endosome pathway.

The protein localises to the early endosome membrane. Its subcellular location is the recycling endosome membrane. It is found in the synapse. The protein resides in the synaptosome. In terms of biological role, SNARE involved in vesicular transport from the late endosomes to the trans-Golgi network. This chain is Vesicle-associated membrane protein 3 (VAMP3), found in Bos taurus (Bovine).